The sequence spans 80 residues: Small ribosomal subunit protein uS17 (80 aa).

This sequence belongs to the universal ribosomal protein uS17 family. Part of the 30S ribosomal subunit.

In terms of biological role, one of the primary rRNA binding proteins, it binds specifically to the 5'-end of 16S ribosomal RNA. The chain is Small ribosomal subunit protein uS17 from Brucella anthropi (strain ATCC 49188 / DSM 6882 / CCUG 24695 / JCM 21032 / LMG 3331 / NBRC 15819 / NCTC 12168 / Alc 37) (Ochrobactrum anthropi).